Reading from the N-terminus, the 270-residue chain is Phosphonoacetaldehyde hydrolase (270 aa).

The Nucleophile role is filled by Asp-11. Residues Asp-11 and Ala-13 each contribute to the Mg(2+) site. Lys-53 functions as the Schiff-base intermediate with substrate in the catalytic mechanism. Asp-187 is a Mg(2+) binding site.

This sequence belongs to the HAD-like hydrolase superfamily. PhnX family. As to quaternary structure, homodimer. Mg(2+) is required as a cofactor.

The enzyme catalyses phosphonoacetaldehyde + H2O = acetaldehyde + phosphate + H(+). Functionally, involved in phosphonate degradation. In Salmonella choleraesuis (strain SC-B67), this protein is Phosphonoacetaldehyde hydrolase.